The sequence spans 284 residues: D-tagatose-1,6-bisphosphate aldolase subunit GatY (284 aa).

Aspartate 82 serves as the catalytic Proton donor. Positions 83 and 180 each coordinate Zn(2+). Glycine 181 provides a ligand contact to dihydroxyacetone phosphate. A Zn(2+)-binding site is contributed by histidine 208. Dihydroxyacetone phosphate-binding positions include 209 to 211 and 230 to 233; these read GAS and NVAT.

This sequence belongs to the class II fructose-bisphosphate aldolase family. TagBP aldolase GatY subfamily. As to quaternary structure, forms a complex with GatZ. Zn(2+) serves as cofactor.

It carries out the reaction D-tagatofuranose 1,6-bisphosphate = D-glyceraldehyde 3-phosphate + dihydroxyacetone phosphate. The protein operates within carbohydrate metabolism; D-tagatose 6-phosphate degradation; D-glyceraldehyde 3-phosphate and glycerone phosphate from D-tagatose 6-phosphate: step 2/2. In terms of biological role, catalytic subunit of the tagatose-1,6-bisphosphate aldolase GatYZ, which catalyzes the reversible aldol condensation of dihydroxyacetone phosphate (DHAP or glycerone-phosphate) with glyceraldehyde 3-phosphate (G3P) to produce tagatose 1,6-bisphosphate (TBP). Requires GatZ subunit for full activity and stability. Is involved in the catabolism of galactitol. The chain is D-tagatose-1,6-bisphosphate aldolase subunit GatY from Shigella boydii serotype 4 (strain Sb227).